The primary structure comprises 214 residues: Ribonuclease HII (214 aa).

Positions 26–214 (EIVCGVDEAG…PVRAALDLIR (189 aa)) constitute an RNase H type-2 domain. A divalent metal cation contacts are provided by aspartate 32, glutamate 33, and aspartate 124.

The protein belongs to the RNase HII family. The cofactor is Mn(2+). Mg(2+) serves as cofactor.

It is found in the cytoplasm. The enzyme catalyses Endonucleolytic cleavage to 5'-phosphomonoester.. In terms of biological role, endonuclease that specifically degrades the RNA of RNA-DNA hybrids. This is Ribonuclease HII from Burkholderia lata (strain ATCC 17760 / DSM 23089 / LMG 22485 / NCIMB 9086 / R18194 / 383).